Consider the following 422-residue polypeptide: Mannose-1-phosphate guanylyltransferase regulatory subunit alpha-B (422 aa).

The segment at 2-253 (LKAIILIGGP…QHFWSQIKSA (252 aa)) is substrate-binding domain. Residues glutamate 85 and glutamine 249 each coordinate GDP-alpha-D-mannose. Positions 275–422 (LATNQGGTPK…NRSFKNQIIL (148 aa)) are hexapeptide repeat domain. The interval 358–386 (TPSDPNPNDPYAKIDSETLFRDGGLTPSI) is C-loop.

The protein belongs to the transferase hexapeptide repeat family. In terms of assembly, component of the GMPPA-GMPPB mannose-1-phosphate guanylyltransferase complex composed of 4 GMPPA subunits and 8 GMPPB subunits; the complex is organized into three layers, a central layer made up of 2 GMPPA dimers sandwiched between two layers each made up of 2 GMPPB dimers.

The protein operates within nucleotide-sugar biosynthesis; GDP-alpha-D-mannose biosynthesis; GDP-alpha-D-mannose from alpha-D-mannose 1-phosphate (GTP route): step 1/1. Functionally, regulatory subunit of the GMPPA-GMPPB mannose-1-phosphate guanylyltransferase complex; reduces the catalytic activity of GMPPB when part of the complex. Mediates allosteric feedback inhibition of GMPPB catalytic activity upon binding GDP-alpha-D-mannose. Together with GMPPB regulates GDP-alpha-D-mannose levels. One of two paralogs (gmppaa and gmppab) that may have redundant functions. In Danio rerio (Zebrafish), this protein is Mannose-1-phosphate guanylyltransferase regulatory subunit alpha-B (gmppab).